The chain runs to 302 residues: 33 kDa chaperonin (302 aa).

2 disulfides stabilise this stretch: cysteine 234–cysteine 236 and cysteine 267–cysteine 270.

This sequence belongs to the HSP33 family. Under oxidizing conditions two disulfide bonds are formed involving the reactive cysteines. Under reducing conditions zinc is bound to the reactive cysteines and the protein is inactive.

Its subcellular location is the cytoplasm. Functionally, redox regulated molecular chaperone. Protects both thermally unfolding and oxidatively damaged proteins from irreversible aggregation. Plays an important role in the bacterial defense system toward oxidative stress. This Neisseria gonorrhoeae (strain NCCP11945) protein is 33 kDa chaperonin.